A 160-amino-acid chain; its full sequence is uncharacterized protein (160 aa).

This is an uncharacterized protein from Mycobacterium tuberculosis (strain CDC 1551 / Oshkosh).